A 297-amino-acid polypeptide reads, in one-letter code: MSDSKKSATVVMPRWRQYWVLTKPRVTQLAVFCAVIGMFLATPGMVPYPVLFGGIVGIWLLAGAAFAVNCLIEQAVDAKMKRTSWRPSATGEVTPLHIIIFSIILGSLGMIILWNFCNPLTMWLTLATFVGYAVIYTWLLKPATPQNIVIGGLSGAMPPALGWAAVTNTLSAEAWHLVLIIFVWTPPHFWALALYRRDDYVQSGLPMLPVTHGERFTLLNIVLYTLILIAATMLPYIYGMSGMVYLISAIILGLLFLAYVVALFISYSDALAKKTFRFSITYLSLLFAALLVDHYFL.

A run of 9 helical transmembrane segments spans residues 26-46 (VTQL…PGMV), 48-68 (YPVL…AFAV), 96-116 (LHII…LWNF), 120-140 (LTMW…TWLL), 147-167 (NIVI…AAVT), 174-194 (AWHL…ALAL), 218-238 (LLNI…PYIY), 245-265 (YLIS…ALFI), and 276-296 (FRFS…DHYF).

Belongs to the UbiA prenyltransferase family. Protoheme IX farnesyltransferase subfamily.

It localises to the cell inner membrane. The enzyme catalyses heme b + (2E,6E)-farnesyl diphosphate + H2O = Fe(II)-heme o + diphosphate. It participates in porphyrin-containing compound metabolism; heme O biosynthesis; heme O from protoheme: step 1/1. In terms of biological role, converts heme B (protoheme IX) to heme O by substitution of the vinyl group on carbon 2 of heme B porphyrin ring with a hydroxyethyl farnesyl side group. This Polynucleobacter necessarius subsp. necessarius (strain STIR1) protein is Protoheme IX farnesyltransferase.